The chain runs to 1057 residues: Carbamoyl phosphate synthase large chain (1057 aa).

A carboxyphosphate synthetic domain region spans residues 1–401 (MPKRNDIKTI…SLLKAIRSLE (401 aa)). Residues Arg-129, Arg-169, Gly-175, Gly-176, Lys-208, Ile-210, Glu-215, Gly-241, Ile-242, His-243, Gln-284, and Glu-298 each coordinate ATP. In terms of domain architecture, ATP-grasp 1 spans 133-327 (RTLMNDLNVP…IAKLAAKIAV (195 aa)). Mg(2+) is bound by residues Gln-284, Glu-298, and Asn-300. Mn(2+)-binding residues include Gln-284, Glu-298, and Asn-300. The interval 402–546 (YGVHHLGLPN…YGTYETENES (145 aa)) is oligomerization domain. The tract at residues 547–929 (IVTDKEKILV…ALFKGLTGSG (383 aa)) is carbamoyl phosphate synthetic domain. In terms of domain architecture, ATP-grasp 2 spans 671-861 (EALLRKINVP…MAQLAMRAII (191 aa)). Arg-707, Arg-746, Leu-748, Glu-752, Gly-777, Val-778, His-779, Ser-780, Gln-820, and Glu-832 together coordinate ATP. Mg(2+) is bound by residues Gln-820, Glu-832, and Asn-834. Residues Gln-820, Glu-832, and Asn-834 each coordinate Mn(2+). The 128-residue stretch at 930 to 1057 (VEVKDHGTVL…ESMTFTMRQM (128 aa)) folds into the MGS-like domain. Residues 930 to 1057 (VEVKDHGTVL…ESMTFTMRQM (128 aa)) are allosteric domain.

The protein belongs to the CarB family. Composed of two chains; the small (or glutamine) chain promotes the hydrolysis of glutamine to ammonia, which is used by the large (or ammonia) chain to synthesize carbamoyl phosphate. Tetramer of heterodimers (alpha,beta)4. Mg(2+) serves as cofactor. Mn(2+) is required as a cofactor.

The catalysed reaction is hydrogencarbonate + L-glutamine + 2 ATP + H2O = carbamoyl phosphate + L-glutamate + 2 ADP + phosphate + 2 H(+). It catalyses the reaction hydrogencarbonate + NH4(+) + 2 ATP = carbamoyl phosphate + 2 ADP + phosphate + 2 H(+). Its pathway is amino-acid biosynthesis; L-arginine biosynthesis; carbamoyl phosphate from bicarbonate: step 1/1. The protein operates within pyrimidine metabolism; UMP biosynthesis via de novo pathway; (S)-dihydroorotate from bicarbonate: step 1/3. Functionally, large subunit of the glutamine-dependent carbamoyl phosphate synthetase (CPSase). CPSase catalyzes the formation of carbamoyl phosphate from the ammonia moiety of glutamine, carbonate, and phosphate donated by ATP, constituting the first step of 2 biosynthetic pathways, one leading to arginine and/or urea and the other to pyrimidine nucleotides. The large subunit (synthetase) binds the substrates ammonia (free or transferred from glutamine from the small subunit), hydrogencarbonate and ATP and carries out an ATP-coupled ligase reaction, activating hydrogencarbonate by forming carboxy phosphate which reacts with ammonia to form carbamoyl phosphate. The polypeptide is Carbamoyl phosphate synthase large chain (Staphylococcus aureus (strain MRSA252)).